A 398-amino-acid polypeptide reads, in one-letter code: MNKESTDLYEILGLTPSASEEDIKKAYRKLAIKYHPDKNKGNPEAEEMFKKINHANSILSNSEKRRVYDQYGEEAVNNGLNEDSFDPMSMFMRMHQPGNKKLRAQMRHQISLQDYFTKKTVKVTITVDSKCDDCDATGFSDKQKHVCKVCRGKGIVVNEIRNGPFIQQIQQHCHGCQGKKYDTTAKDLHCPSCKGAGINKSEEETEVNVPFDILRNPKVILEGKGPWVDGKNIDLEIVFILAFSDGFELTDNHKLIYTMEINFPETLCGFRRIIDHPSGDSLLIVANPGFVINPHYIYLLERKGLNNDTLYLKFKINYSKLIHIPKKKVFNFENLEIALGTRYVPDVSDDIGTEPENVFNLSTLRQINTDPSDESQDRDSEESYGGHGRPEGVGCAQQ.

Residues 7–72 enclose the J domain; the sequence is DLYEILGLTP…EKRRVYDQYG (66 aa). The CR-type zinc-finger motif lies at 118–202; sequence KKTVKVTITV…CKGAGINKSE (85 aa). CXXCXGXG motif repeat units follow at residues 131–138, 147–154, 173–180, and 190–197; these read CDDCDATG, CKVCRGKG, CHGCQGKK, and CPSCKGAG. A disordered region spans residues 364 to 398; sequence LRQINTDPSDESQDRDSEESYGGHGRPEGVGCAQQ. The segment covering 371–382 has biased composition (acidic residues); it reads PSDESQDRDSEE.

The cofactor is Zn(2+).

The protein is DnaJ-like protein R260 of Acanthamoeba polyphaga mimivirus (APMV).